A 66-amino-acid chain; its full sequence is MPQLDTSTWLTMILSMFLVLFIIFQLKISKHNFYHNPELMTTKTPKQNTPWETKWTKIYLPLSLPL.

A helical membrane pass occupies residues 8 to 24 (TWLTMILSMFLVLFIIF). N6-acetyllysine; alternate is present on K54. N6-succinyllysine; alternate is present on K54. K57 is subject to N6-acetyllysine.

It belongs to the ATPase protein 8 family. Component of the ATP synthase complex composed at least of ATP5F1A/subunit alpha, ATP5F1B/subunit beta, ATP5MC1/subunit c (homooctomer), MT-ATP6/subunit a, MT-ATP8/subunit 8, ATP5ME/subunit e, ATP5MF/subunit f, ATP5MG/subunit g, ATP5MK/subunit k, ATP5MJ/subunit j, ATP5F1C/subunit gamma, ATP5F1D/subunit delta, ATP5F1E/subunit epsilon, ATP5PF/subunit F6, ATP5PB/subunit b, ATP5PD/subunit d, ATP5PO/subunit OSCP. ATP synthase complex consists of a soluble F(1) head domain (subunits alpha(3) and beta(3)) - the catalytic core - and a membrane F(0) domain - the membrane proton channel (subunits c, a, 8, e, f, g, k and j). These two domains are linked by a central stalk (subunits gamma, delta, and epsilon) rotating inside the F1 region and a stationary peripheral stalk (subunits F6, b, d, and OSCP). Interacts with PRICKLE3.

The protein resides in the mitochondrion membrane. In terms of biological role, subunit 8, of the mitochondrial membrane ATP synthase complex (F(1)F(0) ATP synthase or Complex V) that produces ATP from ADP in the presence of a proton gradient across the membrane which is generated by electron transport complexes of the respiratory chain. ATP synthase complex consist of a soluble F(1) head domain - the catalytic core - and a membrane F(1) domain - the membrane proton channel. These two domains are linked by a central stalk rotating inside the F(1) region and a stationary peripheral stalk. During catalysis, ATP synthesis in the catalytic domain of F(1) is coupled via a rotary mechanism of the central stalk subunits to proton translocation. In vivo, can only synthesize ATP although its ATP hydrolase activity can be activated artificially in vitro. Part of the complex F(0) domain. This is ATP synthase F(0) complex subunit 8 from Ovis aries (Sheep).